The following is a 180-amino-acid chain: UPF0227 protein YcfP (180 aa).

It belongs to the UPF0227 family.

The sequence is that of UPF0227 protein YcfP from Salmonella choleraesuis (strain SC-B67).